A 594-amino-acid polypeptide reads, in one-letter code: Zinc finger protein 467 (594 aa).

A disordered region spans residues 1–86 (MRETLEALNS…PQKAEPAGSV (86 aa)). An interaction with STAT3 region spans residues 1–183 (MRETLEALNS…TLRLHQRLHR (183 aa)). Polar residues predominate over residues 31-47 (SNAQEKMSSRGESTLHS). Positions 54–64 (PGQKEGIHTEQ) are enriched in basic and acidic residues. K97 participates in a covalent cross-link: Glycyl lysine isopeptide (Lys-Gly) (interchain with G-Cter in SUMO2). 12 C2H2-type zinc fingers span residues 160-182 (YGCE…QRLH), 188-210 (CACP…QRSH), 216-238 (FPCS…LRTH), 244-266 (YPCA…QKTH), 272-294 (FPCT…QRIH), 300-322 (YQCT…QRVH), 355-377 (FACS…QSLH), 430-452 (FFCP…RRVH), 458-480 (FACA…SRAH), 486-508 (FACA…QAVH), 514-536 (HACA…QAIH), and 542-564 (FSCP…QRIH). The disordered stretch occupies residues 313-351 (QHLVRHQRVHDAASRTRSSPDIPVAPHSPTASLTPSPPG). K368 participates in a covalent cross-link: Glycyl lysine isopeptide (Lys-Gly) (interchain with G-Cter in SUMO2).

It belongs to the krueppel C2H2-type zinc-finger protein family. As to quaternary structure, interacts with STAT3. Enhances STAT3 activity by keeping it in the nucleus.

The protein localises to the nucleus. Functionally, transcription factor that promotes adipocyte differentiation and suppresses osteoblast differentiation in the bone marrow. Enhances the osteoclast-supporting ability of stromal cells. Binds with STAT3 the consensus sequence 5'-CTTCTGGGAAGA-3' of the acute phase response element (APRE). Transactivates several promoters including FOS, OSM and PPARG. Recruits a histone deacetylase complex. This Mus musculus (Mouse) protein is Zinc finger protein 467 (Znf467).